The following is a 184-amino-acid chain: ATP synthase subunit b, chloroplastic (184 aa).

The helical transmembrane segment at 27 to 49 threads the bilayer; that stretch reads LATNPINLSVVFGVLIFFGKGVL.

It belongs to the ATPase B chain family. As to quaternary structure, F-type ATPases have 2 components, F(1) - the catalytic core - and F(0) - the membrane proton channel. F(1) has five subunits: alpha(3), beta(3), gamma(1), delta(1), epsilon(1). F(0) has four main subunits: a(1), b(1), b'(1) and c(10-14). The alpha and beta chains form an alternating ring which encloses part of the gamma chain. F(1) is attached to F(0) by a central stalk formed by the gamma and epsilon chains, while a peripheral stalk is formed by the delta, b and b' chains.

It localises to the plastid. Its subcellular location is the chloroplast thylakoid membrane. In terms of biological role, f(1)F(0) ATP synthase produces ATP from ADP in the presence of a proton or sodium gradient. F-type ATPases consist of two structural domains, F(1) containing the extramembraneous catalytic core and F(0) containing the membrane proton channel, linked together by a central stalk and a peripheral stalk. During catalysis, ATP synthesis in the catalytic domain of F(1) is coupled via a rotary mechanism of the central stalk subunits to proton translocation. Its function is as follows. Component of the F(0) channel, it forms part of the peripheral stalk, linking F(1) to F(0). The sequence is that of ATP synthase subunit b, chloroplastic from Draba nemorosa (Woodland whitlowgrass).